A 178-amino-acid chain; its full sequence is Translation initiation factor IF-3 (178 aa).

Residues 1-20 form a disordered region; sequence MRRPFKTDAPVKDGPRSNRE.

It belongs to the IF-3 family. Monomer.

The protein resides in the cytoplasm. Functionally, IF-3 binds to the 30S ribosomal subunit and shifts the equilibrium between 70S ribosomes and their 50S and 30S subunits in favor of the free subunits, thus enhancing the availability of 30S subunits on which protein synthesis initiation begins. The polypeptide is Translation initiation factor IF-3 (Rhizobium leguminosarum bv. trifolii (strain WSM2304)).